A 390-amino-acid polypeptide reads, in one-letter code: Putative 8-amino-7-oxononanoate synthase (390 aa).

A substrate-binding site is contributed by arginine 19. Pyridoxal 5'-phosphate is bound at residue 105 to 106 (GY). Histidine 130 serves as a coordination point for substrate. Pyridoxal 5'-phosphate contacts are provided by residues serine 177, 202–205 (DEAH), and 234–237 (TFSK). N6-(pyridoxal phosphate)lysine is present on lysine 237. Threonine 351 contributes to the substrate binding site.

The protein belongs to the class-II pyridoxal-phosphate-dependent aminotransferase family. BioF subfamily. In terms of assembly, homodimer. Pyridoxal 5'-phosphate is required as a cofactor.

It catalyses the reaction 6-carboxyhexanoyl-[ACP] + L-alanine + H(+) = (8S)-8-amino-7-oxononanoate + holo-[ACP] + CO2. Its pathway is cofactor biosynthesis; biotin biosynthesis. Catalyzes the decarboxylative condensation of pimeloyl-[acyl-carrier protein] and L-alanine to produce 8-amino-7-oxononanoate (AON), [acyl-carrier protein], and carbon dioxide. The chain is Putative 8-amino-7-oxononanoate synthase (bioF) from Geobacillus kaustophilus (strain HTA426).